The primary structure comprises 205 residues: uncharacterized protein (205 aa).

The signal sequence occupies residues 1-40; that stretch reads MSAGKSYRKKMKQRRMNMKISKYALGILMLSLVFVLSACG. Residues 44–82 are disordered; the sequence is STKESTHDNHSDSSTHEEMDHSGSADVPEGLQESKNPKY. Over residues 47 to 66 the composition is skewed to basic and acidic residues; that stretch reads ESTHDNHSDSSTHEEMDHSG.

This is an uncharacterized protein from Bacillus subtilis (strain 168).